The primary structure comprises 154 residues: Protein ripply (154 aa).

The WRPW motif signature appears at 38–41; that stretch reads WRPW. Disordered regions lie at residues 54 to 86 and 121 to 154; these read IRER…FQHP and EDPA…PILN. The interval 85–119 is ripply homology domain; it reads HPVKLHWSKPVYDYMYQYGKQLLDAFPVQATICIV. Residues 121–140 are compositionally biased toward acidic residues; that stretch reads EDPAQSDDSDFESDYEDDSD.

This sequence belongs to the ripply family. In terms of tissue distribution, in the late gastrula stage, expression appears in the dorsal presomitic mesoderm and in the first three pairs of nascent somites. Expressed strongly in forming somites and then expression is rapidly down-regulated except in the first somite pair where expression is maintained for a longer period. Also expressed in the presumptive notochord and in the tail bud at the 48 hour larval stage. Expression disappears by the 72 hour stage.

It localises to the nucleus. In terms of biological role, may play a role in somitogenesis. This Branchiostoma belcheri (Amphioxus) protein is Protein ripply.